A 320-amino-acid polypeptide reads, in one-letter code: MIKKIGVLTSGGDAPGMNAAIRGVVRAALSEGLEVMGIYDGYLGLYEDRMVQLDRYSVSDMINRGGTFLGSARFPEFRDENIRAVAIENLKKRGIDALVVIGGDGSYMGAMRLTEMGFPCIGLPGTIDNDIKGTDYTIGFFTALSTVVEAIDRLRDTSSSHQRISVVEVMGRYCGDLTLAAAIAGGCEFVVVPEVEFSREDLVNEIKAGIAKGKKHAIVAITEHMCDVDELAHFIEKETGRETRATVLGHIQRGGSPVPYDRILASRMGAYAIELLLAGYGGRCVGIQNEQLVHHDIIDAIENMKRPFKGDWLECAKKLY.

An ATP-binding site is contributed by Gly-12. Residues 22-26 (RGVVR) and 55-60 (RYSVSD) each bind ADP. ATP contacts are provided by residues 73–74 (RF) and 103–106 (GDGS). Residue Asp-104 coordinates Mg(2+). Residue 126–128 (TID) coordinates substrate. Asp-128 serves as the catalytic Proton acceptor. Arg-155 contacts ADP. Residues Arg-163 and 170-172 (MGR) each bind substrate. Residues 186 to 188 (GCE), Lys-212, and 214 to 216 (KKH) each bind ADP. Residues Glu-223, Arg-244, and 250-253 (HIQR) each bind substrate.

Belongs to the phosphofructokinase type A (PFKA) family. ATP-dependent PFK group I subfamily. Prokaryotic clade 'B1' sub-subfamily. Homotetramer. Mg(2+) is required as a cofactor.

It is found in the cytoplasm. It carries out the reaction beta-D-fructose 6-phosphate + ATP = beta-D-fructose 1,6-bisphosphate + ADP + H(+). It functions in the pathway carbohydrate degradation; glycolysis; D-glyceraldehyde 3-phosphate and glycerone phosphate from D-glucose: step 3/4. Allosterically activated by ADP and other diphosphonucleosides, and allosterically inhibited by phosphoenolpyruvate. Functionally, catalyzes the phosphorylation of D-fructose 6-phosphate to fructose 1,6-bisphosphate by ATP, the first committing step of glycolysis. In Escherichia fergusonii (strain ATCC 35469 / DSM 13698 / CCUG 18766 / IAM 14443 / JCM 21226 / LMG 7866 / NBRC 102419 / NCTC 12128 / CDC 0568-73), this protein is ATP-dependent 6-phosphofructokinase.